We begin with the raw amino-acid sequence, 167 residues long: MYPCERVGLSFTETAPYLFRNTVDLAITPEQLFEVLADPQAWPRWATVITKVTWTSPEPFGAGTTRIVEMRGGIVGDEEFISWEPFTRMAFRFNECSTRAVGAFAEDYRVQAIPGGCRLTWTMAQKLAGPARPALFVFRPLLNLALRRFLRNLRRYTDARFAAAQQS.

This is an uncharacterized protein from Mycobacterium tuberculosis (strain CDC 1551 / Oshkosh).